The sequence spans 290 residues: Small ribosomal subunit biogenesis GTPase RsgA (290 aa).

One can recognise a CP-type G domain in the interval 62–219; sequence DNYLIRPQVA…VVDTPGFSTL (158 aa). GTP is bound by residues 111-114 and 162-170; these read NKID and GPSGVGKST. 4 residues coordinate Zn(2+): cysteine 243, cysteine 248, histidine 250, and cysteine 256.

It belongs to the TRAFAC class YlqF/YawG GTPase family. RsgA subfamily. Monomer. Associates with 30S ribosomal subunit, binds 16S rRNA. Zn(2+) is required as a cofactor.

Its subcellular location is the cytoplasm. In terms of biological role, one of several proteins that assist in the late maturation steps of the functional core of the 30S ribosomal subunit. Helps release RbfA from mature subunits. May play a role in the assembly of ribosomal proteins into the subunit. Circularly permuted GTPase that catalyzes slow GTP hydrolysis, GTPase activity is stimulated by the 30S ribosomal subunit. The protein is Small ribosomal subunit biogenesis GTPase RsgA of Clostridium novyi (strain NT).